The primary structure comprises 149 residues: Large ribosomal subunit protein eL19 (149 aa).

The disordered stretch occupies residues 45 to 130 (VDEGAIQAKD…RDLYDKAGGG (86 aa)). The segment covering 58–85 (NSRGRARERQKKRAYGHQKGAGSRKGKA) has biased composition (basic residues). A compositionally biased stretch (basic and acidic residues) spans 90-113 (NSKEDWESRIRAQRTKLRELRDEG).

Belongs to the eukaryotic ribosomal protein eL19 family. As to quaternary structure, part of the 50S ribosomal subunit.

Binds to the 23S rRNA. Located at the polypeptide exit tunnel on the outside of the subunit. This chain is Large ribosomal subunit protein eL19, found in Haloarcula marismortui (strain ATCC 43049 / DSM 3752 / JCM 8966 / VKM B-1809) (Halobacterium marismortui).